The primary structure comprises 809 residues: Bifunctional enzyme MurC/Ddl (809 aa).

The segment at 1–450 is UDP-N-acetylmuramate--alanine ligase; that stretch reads MKGTPQYHFI…GEALKDFNPK (450 aa). ATP-binding positions include 111–117 and 606–661; these read GSHGKTG and IETF…SREI. Residues 451-809 are D-alanine--D-alanine ligase; that stretch reads KLSIGLVCGG…FTKEQDLVKR (359 aa). The ATP-grasp domain maps to 573–784; the sequence is KRIASAVGVP…QEQIVDHFII (212 aa). Residues D738, E751, and N753 each contribute to the Mg(2+) site.

In the N-terminal section; belongs to the MurCDEF family. It in the C-terminal section; belongs to the D-alanine--D-alanine ligase family. It depends on Mg(2+) as a cofactor. Mn(2+) is required as a cofactor.

The protein localises to the cytoplasm. It catalyses the reaction UDP-N-acetyl-alpha-D-muramate + L-alanine + ATP = UDP-N-acetyl-alpha-D-muramoyl-L-alanine + ADP + phosphate + H(+). It carries out the reaction 2 D-alanine + ATP = D-alanyl-D-alanine + ADP + phosphate + H(+). The protein operates within cell wall biogenesis; peptidoglycan biosynthesis. Functionally, cell wall formation. This is Bifunctional enzyme MurC/Ddl (murC/ddl) from Chlamydia pneumoniae (Chlamydophila pneumoniae).